Here is a 433-residue protein sequence, read N- to C-terminus: Glutamate-1-semialdehyde 2,1-aminomutase (433 aa).

Lysine 265 is subject to N6-(pyridoxal phosphate)lysine.

It belongs to the class-III pyridoxal-phosphate-dependent aminotransferase family. HemL subfamily. Homodimer. Pyridoxal 5'-phosphate serves as cofactor.

It is found in the cytoplasm. The enzyme catalyses (S)-4-amino-5-oxopentanoate = 5-aminolevulinate. It functions in the pathway porphyrin-containing compound metabolism; protoporphyrin-IX biosynthesis; 5-aminolevulinate from L-glutamyl-tRNA(Glu): step 2/2. This is Glutamate-1-semialdehyde 2,1-aminomutase from Shewanella denitrificans (strain OS217 / ATCC BAA-1090 / DSM 15013).